A 154-amino-acid polypeptide reads, in one-letter code: MTIWIDADACPRVIKEIVFRASERLNLPVMLVANKPLAKHHAGLISSVVVDDGPDVADDYIAEQATAQDLVITADIPLAARIVAKGAVGIDPRGELYNEDNVGERLSMRDLMQSLRSEGLVQGGPAQFGMTDRQRFASSLDRVLTRMMREAKKQ.

This sequence belongs to the UPF0178 family.

This chain is UPF0178 protein Glov_0658, found in Trichlorobacter lovleyi (strain ATCC BAA-1151 / DSM 17278 / SZ) (Geobacter lovleyi).